Consider the following 344-residue polypeptide: Dihydroorotase (344 aa).

2 residues coordinate Zn(2+): His-13 and His-15. Substrate contacts are provided by residues 15-17 (HFR) and Asn-41. Zn(2+)-binding residues include Lys-98, His-135, and His-173. N6-carboxylysine is present on Lys-98. Residue His-135 coordinates substrate. Leu-218 is a substrate binding site. Asp-246 serves as a coordination point for Zn(2+). The active site involves Asp-246. The substrate site is built by His-250 and Ala-262.

The protein belongs to the metallo-dependent hydrolases superfamily. DHOase family. Class II DHOase subfamily. In terms of assembly, homodimer. The cofactor is Zn(2+).

It carries out the reaction (S)-dihydroorotate + H2O = N-carbamoyl-L-aspartate + H(+). Its pathway is pyrimidine metabolism; UMP biosynthesis via de novo pathway; (S)-dihydroorotate from bicarbonate: step 3/3. Its function is as follows. Catalyzes the reversible cyclization of carbamoyl aspartate to dihydroorotate. The chain is Dihydroorotase from Shewanella woodyi (strain ATCC 51908 / MS32).